The chain runs to 72 residues: Translation initiation factor IF-1 1 (72 aa).

The 72-residue stretch at 1–72 (MSKDDVIQMQ…TRARIVFRSK (72 aa)) folds into the S1-like domain.

This sequence belongs to the IF-1 family. Component of the 30S ribosomal translation pre-initiation complex which assembles on the 30S ribosome in the order IF-2 and IF-3, IF-1 and N-formylmethionyl-tRNA(fMet); mRNA recruitment can occur at any time during PIC assembly.

It is found in the cytoplasm. Functionally, one of the essential components for the initiation of protein synthesis. Stabilizes the binding of IF-2 and IF-3 on the 30S subunit to which N-formylmethionyl-tRNA(fMet) subsequently binds. Helps modulate mRNA selection, yielding the 30S pre-initiation complex (PIC). Upon addition of the 50S ribosomal subunit IF-1, IF-2 and IF-3 are released leaving the mature 70S translation initiation complex. This Bordetella avium (strain 197N) protein is Translation initiation factor IF-1 1.